Consider the following 173-residue polypeptide: Acireductone dioxygenase (173 aa).

Residues 1 to 20 (MKVYEYDNSTEDQREDHDSG) are disordered. Residues histidine 81, histidine 83, glutamate 87, and histidine 126 each coordinate Fe(2+). The Ni(2+) site is built by histidine 81, histidine 83, glutamate 87, and histidine 126.

Belongs to the acireductone dioxygenase (ARD) family. The cofactor is Fe(2+). Requires Ni(2+) as cofactor.

Its subcellular location is the cytoplasm. The protein localises to the nucleus. The enzyme catalyses 1,2-dihydroxy-5-(methylsulfanyl)pent-1-en-3-one + O2 = 4-methylsulfanyl-2-oxobutanoate + formate + 2 H(+). The catalysed reaction is 1,2-dihydroxy-5-(methylsulfanyl)pent-1-en-3-one + O2 = 3-(methylsulfanyl)propanoate + CO + formate + 2 H(+). It functions in the pathway amino-acid biosynthesis; L-methionine biosynthesis via salvage pathway; L-methionine from S-methyl-5-thio-alpha-D-ribose 1-phosphate: step 5/6. Functionally, catalyzes 2 different reactions between oxygen and the acireductone 1,2-dihydroxy-3-keto-5-methylthiopentene (DHK-MTPene) depending upon the metal bound in the active site. Fe-containing acireductone dioxygenase (Fe-ARD) produces formate and 2-keto-4-methylthiobutyrate (KMTB), the alpha-ketoacid precursor of methionine in the methionine recycle pathway. Ni-containing acireductone dioxygenase (Ni-ARD) produces methylthiopropionate, carbon monoxide and formate, and does not lie on the methionine recycle pathway. This is Acireductone dioxygenase from Tuber melanosporum (strain Mel28) (Perigord black truffle).